A 312-amino-acid polypeptide reads, in one-letter code: Metaxin-1 homolog (312 aa).

A helical transmembrane segment spans residues 282–302; it reads ILFTIGALVLSVAFAIHTGLI.

This sequence belongs to the metaxin family. Associates with the mitochondrial contact site and cristae organizing system (MICOS) complex (also known as MINOS or MitOS complex).

It is found in the mitochondrion outer membrane. In terms of biological role, involved in transport of proteins into the mitochondrion. Essential for embryonic development. This chain is Metaxin-1 homolog, found in Caenorhabditis briggsae.